The chain runs to 382 residues: Chaperone protein DnaJ 2 (382 aa).

A J domain is found at 4–68; it reads DYYGLLGVSK…DKRRIVDLGG (65 aa). Residues 132 to 214 form a CR-type zinc finger; it reads GVTKQVTVDT…CMGDGRIRAR (83 aa). Zn(2+)-binding residues include C145, C148, C162, C165, C188, C191, C202, and C205. CXXCXGXG motif repeat units lie at residues 145–152, 162–169, 188–195, and 202–209; these read CDRCQGKG, CDTCGGRG, CPTCRGVG, and CQQCMGDG.

This sequence belongs to the DnaJ family. As to quaternary structure, homodimer. Interacts with RNase J. Requires Zn(2+) as cofactor.

The protein localises to the cytoplasm. Its function is as follows. Participates actively in the response to hyperosmotic and heat shock by preventing the aggregation of stress-denatured proteins and by disaggregating proteins, also in an autonomous, DnaK-independent fashion. Unfolded proteins bind initially to DnaJ; upon interaction with the DnaJ-bound protein, DnaK hydrolyzes its bound ATP, resulting in the formation of a stable complex. GrpE releases ADP from DnaK; ATP binding to DnaK triggers the release of the substrate protein, thus completing the reaction cycle. Several rounds of ATP-dependent interactions between DnaJ, DnaK and GrpE are required for fully efficient folding. Also involved, together with DnaK and GrpE, in the DNA replication of plasmids through activation of initiation proteins. Inhibits the beta-lactamase and RNase activity of RNase J. The sequence is that of Chaperone protein DnaJ 2 from Mycobacterium tuberculosis (strain ATCC 25618 / H37Rv).